A 356-amino-acid chain; its full sequence is Magnesium-protoporphyrin IX monomethyl ester [oxidative] cyclase (356 aa).

This sequence belongs to the AcsF family. Fe cation serves as cofactor.

It carries out the reaction Mg-protoporphyrin IX 13-monomethyl ester + 3 NADPH + 3 O2 + 2 H(+) = 3,8-divinyl protochlorophyllide a + 3 NADP(+) + 5 H2O. It functions in the pathway porphyrin-containing compound metabolism; chlorophyll biosynthesis (light-independent). Functionally, catalyzes the formation of the isocyclic ring in chlorophyll biosynthesis. Mediates the cyclase reaction, which results in the formation of divinylprotochlorophyllide (Pchlide) characteristic of all chlorophylls from magnesium-protoporphyrin IX 13-monomethyl ester (MgPMME). The sequence is that of Magnesium-protoporphyrin IX monomethyl ester [oxidative] cyclase from Synechococcus sp. (strain CC9605).